Here is a 129-residue protein sequence, read N- to C-terminus: UPF0344 protein SAB0838 (129 aa).

4 helical membrane passes run 1-21 (MLHLHILSWVLAIILFIATYL), 36-56 (LHMVLRLFMLLMLISGFWILI), 67-87 (MLLTLKMLCGVAVVGLMEVSI), and 99-119 (MFWITIALIIITMVLGVILPL).

The protein belongs to the UPF0344 family.

The protein localises to the cell membrane. The chain is UPF0344 protein SAB0838 from Staphylococcus aureus (strain bovine RF122 / ET3-1).